Reading from the N-terminus, the 358-residue chain is DNA replication and repair protein RecF (358 aa).

G30–T37 contributes to the ATP binding site.

Belongs to the RecF family.

Its subcellular location is the cytoplasm. Its function is as follows. The RecF protein is involved in DNA metabolism; it is required for DNA replication and normal SOS inducibility. RecF binds preferentially to single-stranded, linear DNA. It also seems to bind ATP. This Acinetobacter baylyi (strain ATCC 33305 / BD413 / ADP1) protein is DNA replication and repair protein RecF.